We begin with the raw amino-acid sequence, 606 residues long: NADH-ubiquinone oxidoreductase chain 5 (606 aa).

The next 16 helical transmembrane spans lie at 3–23, 35–55, 87–107, 117–137, 140–160, 171–191, 211–233, 241–261, 273–293, 301–320, 325–347, 366–386, 402–422, 457–477, 488–508, and 582–602; these read LFTSTLILSLSMLTIPVLMSL, YVKTIISYAFFTSLIPTLIFI, MIFTPVALFVTWSIMEFSMWY, FFKYLLMFLITMMILVTANNL, LFIGWEGVGIMSFLLIGWWYG, AILYNRIGDIGFILAMAWFLF, LPLLGLLLAATGKSAQFGLHPWL, TPVSALLHSSTMVVAGIFLLI, MQTLILCMGAITTLFTAICAL, IIAFSTSSQLGLMMVTIGIN, AFLHICTHAFFKAMLFMCSGSII, LPFTTTSLIVGSLALTGTPFL, SYTNAWALLMTLIATSLTAVY, LLIGSIFAGFIISLNITPMTI, LTALIITLTGFILALEISLMT, and GLIKLYFLSFLITLIITMLLF.

It belongs to the complex I subunit 5 family. Core subunit of respiratory chain NADH dehydrogenase (Complex I) which is composed of 45 different subunits.

It localises to the mitochondrion inner membrane. It catalyses the reaction a ubiquinone + NADH + 5 H(+)(in) = a ubiquinol + NAD(+) + 4 H(+)(out). Functionally, core subunit of the mitochondrial membrane respiratory chain NADH dehydrogenase (Complex I) which catalyzes electron transfer from NADH through the respiratory chain, using ubiquinone as an electron acceptor. Essential for the catalytic activity and assembly of complex I. This is NADH-ubiquinone oxidoreductase chain 5 (MT-ND5) from Pseudosoriculus fumidus (Taiwanese brown-toothed shrew).